The primary structure comprises 162 residues: Phosphopantetheine adenylyltransferase (162 aa).

A substrate-binding site is contributed by Thr9. ATP-binding positions include 9–10 (TF) and His17. Substrate-binding residues include Lys41, Leu73, and Arg87. ATP is bound by residues 88–90 (GLR), Glu98, and 123–129 (LSYISSS).

The protein belongs to the bacterial CoaD family. Homohexamer. The cofactor is Mg(2+).

The protein localises to the cytoplasm. The catalysed reaction is (R)-4'-phosphopantetheine + ATP + H(+) = 3'-dephospho-CoA + diphosphate. It participates in cofactor biosynthesis; coenzyme A biosynthesis; CoA from (R)-pantothenate: step 4/5. Reversibly transfers an adenylyl group from ATP to 4'-phosphopantetheine, yielding dephospho-CoA (dPCoA) and pyrophosphate. The polypeptide is Phosphopantetheine adenylyltransferase (Teredinibacter turnerae (strain ATCC 39867 / T7901)).